We begin with the raw amino-acid sequence, 263 residues long: Endonuclease 8 (263 aa).

The active-site Schiff-base intermediate with DNA is Pro2. Glu3 functions as the Proton donor in the catalytic mechanism. The active-site Proton donor; for beta-elimination activity is the Lys53. DNA contacts are provided by Gln70, Arg125, and Asn169. An FPG-type zinc finger spans residues 229 to 263 (KVFHRDGEPCERCGSIIEKTTLSSRPFYWCPGCQH). The active-site Proton donor; for delta-elimination activity is the Arg253.

Belongs to the FPG family. It depends on Zn(2+) as a cofactor.

The enzyme catalyses 2'-deoxyribonucleotide-(2'-deoxyribose 5'-phosphate)-2'-deoxyribonucleotide-DNA = a 3'-end 2'-deoxyribonucleotide-(2,3-dehydro-2,3-deoxyribose 5'-phosphate)-DNA + a 5'-end 5'-phospho-2'-deoxyribonucleoside-DNA + H(+). In terms of biological role, involved in base excision repair of DNA damaged by oxidation or by mutagenic agents. Acts as a DNA glycosylase that recognizes and removes damaged bases. Has a preference for oxidized pyrimidines, such as thymine glycol, 5,6-dihydrouracil and 5,6-dihydrothymine. Has AP (apurinic/apyrimidinic) lyase activity and introduces nicks in the DNA strand. Cleaves the DNA backbone by beta-delta elimination to generate a single-strand break at the site of the removed base with both 3'- and 5'-phosphates. This chain is Endonuclease 8, found in Escherichia coli O9:H4 (strain HS).